The following is a 617-amino-acid chain: 1-deoxy-D-xylulose-5-phosphate synthase (617 aa).

Residues histidine 76 and 117–119 contribute to the thiamine diphosphate site; that span reads GHS. Residue aspartate 148 coordinates Mg(2+). Residues 149-150, asparagine 177, tyrosine 285, and glutamate 366 contribute to the thiamine diphosphate site; that span reads GA. Asparagine 177 lines the Mg(2+) pocket.

Belongs to the transketolase family. DXPS subfamily. As to quaternary structure, homodimer. Mg(2+) serves as cofactor. Requires thiamine diphosphate as cofactor.

The enzyme catalyses D-glyceraldehyde 3-phosphate + pyruvate + H(+) = 1-deoxy-D-xylulose 5-phosphate + CO2. It participates in metabolic intermediate biosynthesis; 1-deoxy-D-xylulose 5-phosphate biosynthesis; 1-deoxy-D-xylulose 5-phosphate from D-glyceraldehyde 3-phosphate and pyruvate: step 1/1. Its function is as follows. Catalyzes the acyloin condensation reaction between C atoms 2 and 3 of pyruvate and glyceraldehyde 3-phosphate to yield 1-deoxy-D-xylulose-5-phosphate (DXP). The protein is 1-deoxy-D-xylulose-5-phosphate synthase of Mannheimia succiniciproducens (strain KCTC 0769BP / MBEL55E).